Reading from the N-terminus, the 78-residue chain is D-alanyl carrier protein (78 aa).

In terms of domain architecture, Carrier spans 1–78 (MAFRENVLEI…MIITQLEALK (78 aa)). An O-(pantetheine 4'-phosphoryl)serine modification is found at Ser-36.

Belongs to the DltC family. 4'-phosphopantetheine is transferred from CoA to a specific serine of apo-DCP.

The protein resides in the cytoplasm. It functions in the pathway cell wall biogenesis; lipoteichoic acid biosynthesis. Functionally, carrier protein involved in the D-alanylation of lipoteichoic acid (LTA). The loading of thioester-linked D-alanine onto DltC is catalyzed by D-alanine--D-alanyl carrier protein ligase DltA. The DltC-carried D-alanyl group is further transferred to cell membrane phosphatidylglycerol (PG) by forming an ester bond, probably catalyzed by DltD. D-alanylation of LTA plays an important role in modulating the properties of the cell wall in Gram-positive bacteria, influencing the net charge of the cell wall. The chain is D-alanyl carrier protein from Listeria welshimeri serovar 6b (strain ATCC 35897 / DSM 20650 / CCUG 15529 / CIP 8149 / NCTC 11857 / SLCC 5334 / V8).